The following is a 133-amino-acid chain: Small ribosomal subunit protein uS8 (133 aa).

The protein belongs to the universal ribosomal protein uS8 family. In terms of assembly, part of the 30S ribosomal subunit. Contacts proteins S5 and S12.

In terms of biological role, one of the primary rRNA binding proteins, it binds directly to 16S rRNA central domain where it helps coordinate assembly of the platform of the 30S subunit. In Crocosphaera subtropica (strain ATCC 51142 / BH68) (Cyanothece sp. (strain ATCC 51142)), this protein is Small ribosomal subunit protein uS8.